A 229-amino-acid polypeptide reads, in one-letter code: Ribonuclease 3 (229 aa).

The 132-residue stretch at 5–136 folds into the RNase III domain; it reads LAELERALGI…VIGAIYLDQG (132 aa). Glutamate 49 provides a ligand contact to Mg(2+). Residue aspartate 53 is part of the active site. 2 residues coordinate Mg(2+): aspartate 122 and glutamate 125. Residue glutamate 125 is part of the active site. Residues 161–229 form the DRBM domain; the sequence is DPTTRLQEIV…AQAALADIDR (69 aa).

It belongs to the ribonuclease III family. Homodimer. Requires Mg(2+) as cofactor.

It is found in the cytoplasm. The catalysed reaction is Endonucleolytic cleavage to 5'-phosphomonoester.. In terms of biological role, digests double-stranded RNA. Involved in the processing of primary rRNA transcript to yield the immediate precursors to the large and small rRNAs (23S and 16S). Processes some mRNAs, and tRNAs when they are encoded in the rRNA operon. Processes pre-crRNA and tracrRNA of type II CRISPR loci if present in the organism. The protein is Ribonuclease 3 of Chloroflexus aggregans (strain MD-66 / DSM 9485).